Reading from the N-terminus, the 379-residue chain is Succinyl-diaminopimelate desuccinylase (379 aa).

Zn(2+) is bound at residue His70. The active site involves Asp72. Asp103 lines the Zn(2+) pocket. Catalysis depends on Glu137, which acts as the Proton acceptor. The Zn(2+) site is built by Glu138, Glu166, and His352.

The protein belongs to the peptidase M20A family. DapE subfamily. As to quaternary structure, homodimer. The cofactor is Zn(2+). It depends on Co(2+) as a cofactor.

The catalysed reaction is N-succinyl-(2S,6S)-2,6-diaminopimelate + H2O = (2S,6S)-2,6-diaminopimelate + succinate. It participates in amino-acid biosynthesis; L-lysine biosynthesis via DAP pathway; LL-2,6-diaminopimelate from (S)-tetrahydrodipicolinate (succinylase route): step 3/3. Functionally, catalyzes the hydrolysis of N-succinyl-L,L-diaminopimelic acid (SDAP), forming succinate and LL-2,6-diaminopimelate (DAP), an intermediate involved in the bacterial biosynthesis of lysine and meso-diaminopimelic acid, an essential component of bacterial cell walls. In Shewanella baltica (strain OS155 / ATCC BAA-1091), this protein is Succinyl-diaminopimelate desuccinylase.